We begin with the raw amino-acid sequence, 327 residues long: GMP reductase (327 aa).

The active-site Thioimidate intermediate is Cys175. 204-227 (IIADGGIRTHGDIAKSIRFGASMV) serves as a coordination point for NADP(+).

It belongs to the IMPDH/GMPR family. GuaC type 2 subfamily.

The enzyme catalyses IMP + NH4(+) + NADP(+) = GMP + NADPH + 2 H(+). Its function is as follows. Catalyzes the irreversible NADPH-dependent deamination of GMP to IMP. It functions in the conversion of nucleobase, nucleoside and nucleotide derivatives of G to A nucleotides, and in maintaining the intracellular balance of A and G nucleotides. This chain is GMP reductase, found in Oceanobacillus iheyensis (strain DSM 14371 / CIP 107618 / JCM 11309 / KCTC 3954 / HTE831).